Here is a 304-residue protein sequence, read N- to C-terminus: Protein Largen (304 aa).

Positions 1–22 (MSAKSKGNPSSSSAAEGPPAAS) are enriched in low complexity. Disordered regions lie at residues 1-27 (MSAK…TKVK), 66-109 (QLED…PPAH), 114-133 (LTVL…TPVR), and 236-304 (EPVH…TTTV). Residues 33-70 (IVEDLELVLGDLKDVAKELKEVVDQIDTLTSDLQLEDE) adopt a coiled-coil conformation. Low complexity predominate over residues 77–91 (TDTLNSSSSGTTASS). 2 stretches are compositionally biased toward pro residues: residues 120-129 (PNPPPPPPRL) and 275-289 (FPPP…PAAP).

Regulator of cell size that promotes cell size increase independently of mTOR and Hippo signaling pathways. Acts by stimulating the translation of specific mRNAs, including those encoding proteins affecting mitochondrial functions. Increases mitochondrial mass and respiration. This Mus musculus (Mouse) protein is Protein Largen (Prr16).